The primary structure comprises 729 residues: Golgin subfamily A member 5 (729 aa).

Ser2 bears the N-acetylserine mark. Over 2–696 (SWFADLAGRA…IFLRRYPIAR (695 aa)) the chain is Cytoplasmic. Residues Arg27 and Arg89 each carry the dimethylated arginine modification. 2 disordered regions span residues 89 to 222 (RTVG…SQEL) and 626 to 645 (SASSGPNSGSAINMSGVDSG). Ser116 bears the Phosphoserine mark. The span at 134–146 (PTGRVEVKKEKGR) shows a compositional bias: basic and acidic residues. Over residues 148–167 (PVSPSSPSGVSSVNTSVTTT) the composition is skewed to low complexity. Polar residues-rich tracts occupy residues 175-186 (GSQSPGVNSSDS) and 626-638 (SASSGPNSGSAIN). The stretch at 215 to 629 (GSSRSQELSN…LEQQVHSASS (415 aa)) forms a coiled coil. The chain crosses the membrane as a helical; Anchor for type IV membrane protein span at residues 697–717 (VFVIIYMALLHLWVMIVLLTY). The Lumenal portion of the chain corresponds to 718 to 729 (SPEMHHDQPYGK).

As to quaternary structure, homodimer. Interacts with RAB1A that has been activated by GTP-binding. Interacts with isoform CASP of CUX1. Highly phosphorylated during mitosis. Phosphorylation is barely detectable during interphase.

The protein localises to the golgi apparatus membrane. Involved in maintaining Golgi structure. Stimulates the formation of Golgi stacks and ribbons. Involved in intra-Golgi retrograde transport. The protein is Golgin subfamily A member 5 (Golga5) of Mus musculus (Mouse).